Reading from the N-terminus, the 42-residue chain is uncharacterized protein (42 aa).

The protein localises to the plastid. The protein resides in the chloroplast. This is an uncharacterized protein from Diacronema lutheri (Unicellular marine alga).